The primary structure comprises 355 residues: MLEKLDSLEEKYDELTHLLSQPEVLSDQARFQKLAKAHSALSDIVTMYREYKSLSRQLEDSKEMLVEEEDEEFRQMLADEIPQLQEKKASLEQELRILLLPQDPNDEKSVIMEIRAGTGGEEAALFAGDLFRMYSRYAEEQGWKIEIMDTHYTDIGGIKEIVFVVDGRGAYSKLKFESGVHRVQRIPVTESGGRIHTSAATVAVLPEAEEVEVAIDPNDLRIDVYCSSGPGGQSVNTTQSAVRITHVPTGEVVTCQDEKSQHKNKAKALRVLRARLKELLEEEKNAEMAGTRKNQVGSGDRSERIRTYNFPQGRVSDHRINLTLHRLESVLEGRLEEIINALIAHYQAERLKQVD.

Gln-233 is subject to N5-methylglutamine.

It belongs to the prokaryotic/mitochondrial release factor family. Post-translationally, methylated by PrmC. Methylation increases the termination efficiency of RF1.

The protein resides in the cytoplasm. Peptide chain release factor 1 directs the termination of translation in response to the peptide chain termination codons UAG and UAA. The polypeptide is Peptide chain release factor 1 (Syntrophomonas wolfei subsp. wolfei (strain DSM 2245B / Goettingen)).